A 237-amino-acid chain; its full sequence is Ribonuclease PH (237 aa).

Phosphate contacts are provided by residues arginine 86 and 124–126 (GTR).

It belongs to the RNase PH family. As to quaternary structure, homohexameric ring arranged as a trimer of dimers.

The catalysed reaction is tRNA(n+1) + phosphate = tRNA(n) + a ribonucleoside 5'-diphosphate. Functionally, phosphorolytic 3'-5' exoribonuclease that plays an important role in tRNA 3'-end maturation. Removes nucleotide residues following the 3'-CCA terminus of tRNAs; can also add nucleotides to the ends of RNA molecules by using nucleoside diphosphates as substrates, but this may not be physiologically important. Probably plays a role in initiation of 16S rRNA degradation (leading to ribosome degradation) during starvation. The sequence is that of Ribonuclease PH from Shewanella woodyi (strain ATCC 51908 / MS32).